The primary structure comprises 206 residues: LexA repressor (206 aa).

The H-T-H motif DNA-binding region spans 28 to 48 (RAEIARELGFRSANAAEEHLK). Residues Ser123 and Lys160 each act as for autocatalytic cleavage activity in the active site.

The protein belongs to the peptidase S24 family. As to quaternary structure, homodimer.

The enzyme catalyses Hydrolysis of Ala-|-Gly bond in repressor LexA.. Its function is as follows. Represses a number of genes involved in the response to DNA damage (SOS response), including recA and lexA. In the presence of single-stranded DNA, RecA interacts with LexA causing an autocatalytic cleavage which disrupts the DNA-binding part of LexA, leading to derepression of the SOS regulon and eventually DNA repair. The sequence is that of LexA repressor from Vibrio campbellii (strain ATCC BAA-1116).